The chain runs to 174 residues: ATP-dependent protease subunit HslV (174 aa).

T2 is an active-site residue. Residues G157, C160, and T163 each coordinate Na(+).

The protein belongs to the peptidase T1B family. HslV subfamily. A double ring-shaped homohexamer of HslV is capped on each side by a ring-shaped HslU homohexamer. The assembly of the HslU/HslV complex is dependent on binding of ATP.

Its subcellular location is the cytoplasm. It carries out the reaction ATP-dependent cleavage of peptide bonds with broad specificity.. With respect to regulation, allosterically activated by HslU binding. Functionally, protease subunit of a proteasome-like degradation complex believed to be a general protein degrading machinery. This Shewanella piezotolerans (strain WP3 / JCM 13877) protein is ATP-dependent protease subunit HslV.